Reading from the N-terminus, the 74-residue chain is Conotoxin Im6.10 (74 aa).

A signal peptide spans 1–19 (MKTGMIICLLLIAFMDADG). A propeptide spanning residues 20–47 (SPGDTLYSQKTADTDSGMKRFQKTFQKR) is cleaved from the precursor. 3 cysteine pairs are disulfide-bonded: cysteine 49–cysteine 58, cysteine 52–cysteine 63, and cysteine 57–cysteine 73.

Expressed by the venom duct.

Its subcellular location is the secreted. Its function is as follows. Probable neurotoxin. The sequence is that of Conotoxin Im6.10 from Conus imperialis (Imperial cone).